Consider the following 115-residue polypeptide: Ig heavy chain V-III region J606 (115 aa).

Residues 1-114 form the Ig-like domain; sequence EVKLEESGGG…WGQGTLVTVS (114 aa). An intrachain disulfide couples C22 to C98.

The polypeptide is Ig heavy chain V-III region J606 (Mus musculus (Mouse)).